The primary structure comprises 394 residues: Formate-dependent phosphoribosylglycinamide formyltransferase (394 aa).

Residues 21–22 and Glu81 contribute to the N(1)-(5-phospho-beta-D-ribosyl)glycinamide site; that span reads EL. ATP is bound by residues Arg113, Lys154, 159–164, 194–197, and Glu202; these read SSGKGQ and EEFI. The region spanning 118–307 is the ATP-grasp domain; the sequence is RLAAEELGLP…QFELHVRAIL (190 aa). Mg(2+)-binding residues include Glu266 and Glu278. N(1)-(5-phospho-beta-D-ribosyl)glycinamide is bound by residues Asp285, Lys355, and 362-363; that span reads RR.

It belongs to the PurK/PurT family. As to quaternary structure, homodimer.

It carries out the reaction N(1)-(5-phospho-beta-D-ribosyl)glycinamide + formate + ATP = N(2)-formyl-N(1)-(5-phospho-beta-D-ribosyl)glycinamide + ADP + phosphate + H(+). It participates in purine metabolism; IMP biosynthesis via de novo pathway; N(2)-formyl-N(1)-(5-phospho-D-ribosyl)glycinamide from N(1)-(5-phospho-D-ribosyl)glycinamide (formate route): step 1/1. Functionally, involved in the de novo purine biosynthesis. Catalyzes the transfer of formate to 5-phospho-ribosyl-glycinamide (GAR), producing 5-phospho-ribosyl-N-formylglycinamide (FGAR). Formate is provided by PurU via hydrolysis of 10-formyl-tetrahydrofolate. This chain is Formate-dependent phosphoribosylglycinamide formyltransferase, found in Pelobacter propionicus (strain DSM 2379 / NBRC 103807 / OttBd1).